A 669-amino-acid polypeptide reads, in one-letter code: DNA ligase (669 aa).

Residues 35–39 (DSVYD), 84–85 (SL), and E116 contribute to the NAD(+) site. The active-site N6-AMP-lysine intermediate is K118. Positions 139, 176, 291, and 315 each coordinate NAD(+). Residues C409, C412, C427, and C432 each coordinate Zn(2+). Residues 591–669 (TTKATLAGKT…EAQLLELIKA (79 aa)) enclose the BRCT domain.

Belongs to the NAD-dependent DNA ligase family. LigA subfamily. It depends on Mg(2+) as a cofactor. Mn(2+) is required as a cofactor.

The enzyme catalyses NAD(+) + (deoxyribonucleotide)n-3'-hydroxyl + 5'-phospho-(deoxyribonucleotide)m = (deoxyribonucleotide)n+m + AMP + beta-nicotinamide D-nucleotide.. Functionally, DNA ligase that catalyzes the formation of phosphodiester linkages between 5'-phosphoryl and 3'-hydroxyl groups in double-stranded DNA using NAD as a coenzyme and as the energy source for the reaction. It is essential for DNA replication and repair of damaged DNA. This chain is DNA ligase, found in Microcystis aeruginosa (strain NIES-843 / IAM M-2473).